A 626-amino-acid polypeptide reads, in one-letter code: ATP-dependent zinc metalloprotease FtsH (626 aa).

Topologically, residues 1–7 (MNGNRPN) are cytoplasmic. Residues 8 to 28 (YISLIFAALVILSLFWLVRSF) traverse the membrane as a helical segment. Topologically, residues 29 to 108 (YFDTSAPSKM…VTGEKGVSSS (80 aa)) are periplasmic. Residues 109–129 (FWVNVIGNVIFIGFLLFMFFF) traverse the membrane as a helical segment. Residues 130–626 (MMRTISGRNN…RAAAGSEQDS (497 aa)) are Cytoplasmic-facing. ATP is bound at residue 202–209 (GPPGTGKT). Residue His424 participates in Zn(2+) binding. Residue Glu425 is part of the active site. Zn(2+) contacts are provided by His428 and Asp501.

This sequence in the central section; belongs to the AAA ATPase family. In the C-terminal section; belongs to the peptidase M41 family. As to quaternary structure, homohexamer. It depends on Zn(2+) as a cofactor.

It is found in the cell inner membrane. Functionally, acts as a processive, ATP-dependent zinc metallopeptidase for both cytoplasmic and membrane proteins. Plays a role in the quality control of integral membrane proteins. In Pseudothermotoga lettingae (strain ATCC BAA-301 / DSM 14385 / NBRC 107922 / TMO) (Thermotoga lettingae), this protein is ATP-dependent zinc metalloprotease FtsH.